The sequence spans 653 residues: Protease 1 (653 aa).

Positions 1–20 (MKRICGSLLLLGLSISAALA) form a signal peptide, or 27. Positions 21–205 (APASRPAAFD…RRLAAASGEK (185 aa)) are excised as a propeptide. 3 disulfide bridges follow: C211–C421, C217–C285, and C241–C263. Active-site charge relay system residues include H262, D318, and S399. A PKD domain is found at 474 to 553 (NTPPVANFTS…TNTKTGSVTV (80 aa)). A propeptide spans 474 to 653 (NTPPVANFTS…AAQRAPGSCG (180 aa)) (thr/Ser-rich). Residues 555–653 (GGPGAQTYTN…AAQRAPGSCG (99 aa)) form the P/Homo B domain.

This sequence belongs to the peptidase S1 family. In terms of processing, three disulfide bonds are present.

The protein localises to the secreted. The catalysed reaction is Preferential cleavage: Lys-|-Xaa, including Lys-|-Pro.. The polypeptide is Protease 1 (Achromobacter lyticus).